Here is a 398-residue protein sequence, read N- to C-terminus: Succinate--CoA ligase [ADP-forming] subunit beta (398 aa).

An ATP-grasp domain is found at 9–253 (KQVLAKYGVA…ESEEDPAELE (245 aa)). ATP-binding positions include K46, 53 to 55 (GRG), E108, C111, and E116. Residues N208 and D222 each coordinate Mg(2+). Substrate-binding positions include N273 and 330 to 332 (GIM).

It belongs to the succinate/malate CoA ligase beta subunit family. In terms of assembly, heterotetramer of two alpha and two beta subunits. Mg(2+) serves as cofactor.

The catalysed reaction is succinate + ATP + CoA = succinyl-CoA + ADP + phosphate. It carries out the reaction GTP + succinate + CoA = succinyl-CoA + GDP + phosphate. It functions in the pathway carbohydrate metabolism; tricarboxylic acid cycle; succinate from succinyl-CoA (ligase route): step 1/1. Succinyl-CoA synthetase functions in the citric acid cycle (TCA), coupling the hydrolysis of succinyl-CoA to the synthesis of either ATP or GTP and thus represents the only step of substrate-level phosphorylation in the TCA. The beta subunit provides nucleotide specificity of the enzyme and binds the substrate succinate, while the binding sites for coenzyme A and phosphate are found in the alpha subunit. The protein is Succinate--CoA ligase [ADP-forming] subunit beta of Paramagnetospirillum magneticum (strain ATCC 700264 / AMB-1) (Magnetospirillum magneticum).